The chain runs to 724 residues: Solute carrier organic anion transporter family member 4C1 (724 aa).

Topologically, residues 1–105 are cytoplasmic; that stretch reads MKSAKGIENL…QCLQRCNTPG (105 aa). 5 positions are modified to phosphoserine: serine 15, serine 16, serine 24, serine 26, and serine 28. The disordered stretch occupies residues 30-71; it reads IEVSALSSDPQRENSQPQELQKPQEPQKSPEPSLPSAPPNVS. A compositionally biased stretch (low complexity) spans 44-60; it reads SQPQELQKPQEPQKSPE. The chain crosses the membrane as a helical span at residues 106-126; sequence GFLLHYCLLAVTQGIVVNGLV. Over 127–145 the chain is Extracellular; sequence NISISTVEKRYEMKSSLTG. A helical membrane pass occupies residues 146–166; sequence LISSSYDISFCLLSLFVSFFG. The Cytoplasmic portion of the chain corresponds to 167-172; sequence ERGHKP. A helical transmembrane segment spans residues 173–197; sequence RWLAFAAFMIGLGALVFSLPQFFSG. Over 198–223 the chain is Extracellular; that stretch reads EYKLGSLFEDTCVTTRNSTSCTSSTS. The chain crosses the membrane as a helical span at residues 224 to 254; it reads SLSNYLYVFILGQLLLGAGGTPLYTLGTAFL. At 255 to 274 the chain is on the cytoplasmic side; that stretch reads DDSVPTHKSSLYIGTGYAMS. A helical membrane pass occupies residues 275–295; the sequence is ILGPAIGYVLGGQLLTIYIDV. Residues 296-311 are Extracellular-facing; that stretch reads AMGESTDVTEDDPRWL. Residues 312-336 traverse the membrane as a helical segment; sequence GAWWIGFLLSWIFAWSLIIPFSCFP. The Cytoplasmic segment spans residues 337–377; the sequence is KHLPGTAEIQAGKTSQAHQSNSNADVKFGKSIKDFPAALKN. Residues 378 to 399 traverse the membrane as a helical segment; the sequence is LMKNAVFMCLVLSTSSEALITT. The Extracellular portion of the chain corresponds to 400 to 419; sequence GFATFLPKFIENQFGLTSSF. Residues 420 to 443 form a helical membrane-spanning segment; sequence AATLGGAVLIPGAALGQILGGFLV. At 444–447 the chain is on the cytoplasmic side; that stretch reads SKFR. The helical transmembrane segment at 448–471 threads the bilayer; the sequence is MTCKNTMKFALFTSGVALTLSFVF. The Extracellular segment spans residues 472–580; that stretch reads MYAKCENEPF…ETHCAKLPIF (109 aa). Residues 495 to 549 form the Kazal-like domain; it reads GNLIAPCNANCNCSRSYYYPVCGDGVQYFSPCFAGCSNPVAHRKPKVYYNCSCIE. Intrachain disulfides connect cysteine 501–cysteine 530, cysteine 507–cysteine 526, and cysteine 516–cysteine 547. The helical transmembrane segment at 581–603 threads the bilayer; that stretch reads LCIFFIVIIFTFMAGTPITVSIL. Residues 604-612 lie on the Cytoplasmic side of the membrane; the sequence is RCVNHRQRS. Residues 613-638 form a helical membrane-spanning segment; sequence LALGIQFMVLRLLGTIPGPIIFGFTI. The Extracellular segment spans residues 639–672; sequence DSTCILWDINDCGIKGACWIYDNIKMAHMLVAIS. The helical transmembrane segment at 673-690 threads the bilayer; sequence VTCKVITMFFNGFAIFLY. The Cytoplasmic portion of the chain corresponds to 691–724; the sequence is KPPPSATDVSFHKENAVVTNVLAEQDLNKIVKEG.

The protein belongs to the organo anion transporter (TC 2.A.60) family. Predominantly expressed in kidney but also weakly expressed in both fetal liver and kidney.

The protein localises to the basolateral cell membrane. The enzyme catalyses estrone 3-sulfate(out) = estrone 3-sulfate(in). It carries out the reaction L-thyroxine(out) = L-thyroxine(in). The catalysed reaction is 3,3',5-triiodo-L-thyronine(out) = 3,3',5-triiodo-L-thyronine(in). It catalyses the reaction chenodeoxycholate(out) = chenodeoxycholate(in). The enzyme catalyses glycocholate(out) = glycocholate(in). It carries out the reaction L-homoarginine(in) = L-homoarginine(out). The catalysed reaction is L-arginine(in) = L-arginine(out). It catalyses the reaction N(omega),N(omega)-dimethyl-L-arginine(out) = N(omega),N(omega)-dimethyl-L-arginine(in). In terms of biological role, mediates the transport of organic anions such as steroids (estrone 3-sulfate, chenodeoxycholate, glycocholate) and thyroid hormones (3,3',5-triiodo-L-thyronine (T3), L-thyroxine (T4)), in the kidney. Capable of transporting cAMP and pharmacological substances such as digoxin, ouabain and methotrexate. Transport is independent of sodium, chloride ion, and ATP. Transport activity is stimulated by an acidic extracellular environment due to increased substrate affinity to the transporter. The driving force for this transport activity is currently not known. The role of hydrogencarbonate (HCO3(-), bicarbonate) as the probable counteranion that exchanges for organic anions is still not well defined. Functions as an uptake transporter at the apical membrane, suggesting a role in renal reabsorption. Involved in the renal secretion of the uremic toxin ADMA (N(omega),N(omega)-dimethyl-L-arginine or asymmetrical dimethylarginine), which is associated to cardiovascular events and mortality, and the structurally related amino acids L-arginine and L-homoarginine (a cardioprotective biomarker). Can act bidirectionally, suggesting a dual protective role of this transport protein; exporting L-homoarginine after being synthesized in proximal tubule cells, and mediating uptake of ADMA from the blood into proximal tubule cells where it is degraded by the enzyme dimethylarginine dimethylaminohydrolase 1 (DDAH1). May be involved in sperm maturation by enabling directed movement of organic anions and compounds within or between cells. This ion-transporting process is important to maintain the strict epididymal homeostasis necessary for sperm maturation. May have a role in secretory functions since seminal vesicle epithelial cells are assumed to secrete proteins involved in decapacitation by modifying surface proteins to facilitate the acquisition of the ability to fertilize the egg. This is Solute carrier organic anion transporter family member 4C1 from Homo sapiens (Human).